The chain runs to 208 residues: Superoxide dismutase [Mn] 2 (208 aa).

Mn(2+)-binding residues include His28, His83, Asp165, and His169.

Belongs to the iron/manganese superoxide dismutase family. In terms of assembly, homodimer. Mn(2+) is required as a cofactor.

It catalyses the reaction 2 superoxide + 2 H(+) = H2O2 + O2. In terms of biological role, destroys superoxide anion radicals which are normally produced within the cells and which are toxic to biological systems. The polypeptide is Superoxide dismutase [Mn] 2 (sodA2) (Bacillus cereus (strain ATCC 14579 / DSM 31 / CCUG 7414 / JCM 2152 / NBRC 15305 / NCIMB 9373 / NCTC 2599 / NRRL B-3711)).